The primary structure comprises 579 residues: Potassium-transporting ATPase potassium-binding subunit (579 aa).

The next 10 membrane-spanning stretches (helical) occupy residues 2-22, 66-86, 135-155, 177-197, 260-280, 292-312, 391-411, 437-457, 490-510, and 546-566; these read MNLVLQYGLYILILVVLAIPL, SFSVLAFSIISLIVLFLLHIF, GLTVQNFVSAAVGISVLFALI, VLYILIPLSIVVSLALVSQGV, TILSNLFEMISLLLIPVALCF, GIAIFVAMGIMLVVAMAIVGV, VFGGVGCGLYGMIGFAILAVF, VLVCLATPIAILIGSGIASIL, FAGFAANTPFINISIGLSMIF, and FIGLLIFVVLLIGALSFFPAL.

This sequence belongs to the KdpA family. The system is composed of three essential subunits: KdpA, KdpB and KdpC.

The protein resides in the cell membrane. Part of the high-affinity ATP-driven potassium transport (or Kdp) system, which catalyzes the hydrolysis of ATP coupled with the electrogenic transport of potassium into the cytoplasm. This subunit binds the extracellular potassium ions and delivers the ions to the membrane domain of KdpB through an intramembrane tunnel. The protein is Potassium-transporting ATPase potassium-binding subunit of Clostridium botulinum (strain Eklund 17B / Type B).